We begin with the raw amino-acid sequence, 269 residues long: Ribosomal RNA small subunit methyltransferase A (269 aa).

S-adenosyl-L-methionine contacts are provided by His-12, Leu-14, Gly-39, Glu-60, Asp-81, and Asn-103.

Belongs to the class I-like SAM-binding methyltransferase superfamily. rRNA adenine N(6)-methyltransferase family. RsmA subfamily.

The protein resides in the cytoplasm. The catalysed reaction is adenosine(1518)/adenosine(1519) in 16S rRNA + 4 S-adenosyl-L-methionine = N(6)-dimethyladenosine(1518)/N(6)-dimethyladenosine(1519) in 16S rRNA + 4 S-adenosyl-L-homocysteine + 4 H(+). Specifically dimethylates two adjacent adenosines (A1518 and A1519) in the loop of a conserved hairpin near the 3'-end of 16S rRNA in the 30S particle. May play a critical role in biogenesis of 30S subunits. This is Ribosomal RNA small subunit methyltransferase A from Leptothrix cholodnii (strain ATCC 51168 / LMG 8142 / SP-6) (Leptothrix discophora (strain SP-6)).